Here is a 482-residue protein sequence, read N- to C-terminus: Glutamyl-tRNA(Gln) amidotransferase subunit A (482 aa).

Residues Lys-75 and Ser-150 each act as charge relay system in the active site. Ser-174 (acyl-ester intermediate) is an active-site residue.

The protein belongs to the amidase family. GatA subfamily. Heterotrimer of A, B and C subunits.

It carries out the reaction L-glutamyl-tRNA(Gln) + L-glutamine + ATP + H2O = L-glutaminyl-tRNA(Gln) + L-glutamate + ADP + phosphate + H(+). Functionally, allows the formation of correctly charged Gln-tRNA(Gln) through the transamidation of misacylated Glu-tRNA(Gln) in organisms which lack glutaminyl-tRNA synthetase. The reaction takes place in the presence of glutamine and ATP through an activated gamma-phospho-Glu-tRNA(Gln). This is Glutamyl-tRNA(Gln) amidotransferase subunit A from Rippkaea orientalis (strain PCC 8801 / RF-1) (Cyanothece sp. (strain PCC 8801)).